Consider the following 455-residue polypeptide: MEVENRPNTYDFSKRDKLLSNRFYEENSLQDETDDGGERWCLICGDRASGLHYGIISCEGCKGFFKRSICNKRIYRCNRDKNCQMSRKQRNRCQYCRLQKCLQMGMNRKAIREDGMPGGRNKMIGPVHISLEEIERLMSGQEFKEGSDLSDSWSHGYSNHSSPGNSLSEGGQSLSFSSSRSVSCRDECISPQLTHTFLMCKYPLPPPTGSILKTQTHTLTGQILADEDLTPLTTPMLIEDGYSVTQSELLALLCGIADELLFRQIVWLKRLPFFTDLSIKDCTRLLGSSWHQLILLSSITVHSAQILGELANVTHHYTPSSHTLQRFGEDAMEVMESLNFLFRKFHQLNISNEEYSCLKTITLLNQETTGLCNTSMLKQLSERYWTLCRELTERLHPQRPKRFSDIITCLTEIRHTSGKMMSIPLEQLPLLFKAVLYSCTTNQNPWLPKSSTSRT.

The segment at residues 38–113 is a DNA-binding region (nuclear receptor); that stretch reads ERWCLICGDR…MGMNRKAIRE (76 aa). NR C4-type zinc fingers lie at residues 41 to 61 and 77 to 96; these read CLIC…CEGC and CNRD…CQYC. The segment at 145-173 is disordered; it reads EGSDLSDSWSHGYSNHSSPGNSLSEGGQS. Positions 149–165 are enriched in polar residues; that stretch reads LSDSWSHGYSNHSSPGN. One can recognise an NR LBD domain in the interval 215–446; sequence QTHTLTGQIL…YSCTTNQNPW (232 aa).

This sequence belongs to the nuclear hormone receptor family. NR6 subfamily. As to quaternary structure, homodimer.

The protein resides in the nucleus. Probable orphan nuclear receptor. Binds to a response element containing repeats of the motif 5'-AGGTCA-3'. The sequence is that of Nuclear receptor subfamily 6 group A member 1-B from Danio rerio (Zebrafish).